The following is a 320-amino-acid chain: Malate dehydrogenase (320 aa).

Residues 10-15 (GSGMIG) and D34 contribute to the NAD(+) site. R83 and R89 together coordinate substrate. NAD(+) contacts are provided by residues N96 and 119–121 (ITN). Substrate-binding residues include N121 and R152. The active-site Proton acceptor is the H176.

It belongs to the LDH/MDH superfamily. MDH type 3 family.

The catalysed reaction is (S)-malate + NAD(+) = oxaloacetate + NADH + H(+). Catalyzes the reversible oxidation of malate to oxaloacetate. The chain is Malate dehydrogenase from Brucella abortus (strain S19).